Consider the following 468-residue polypeptide: Glutamate--tRNA ligase (468 aa).

A 'HIGH' region motif is present at residues 12–22 (PSPTGMMHIGT). The 'KMSKS' region motif lies at 238 to 242 (KLSKR). K241 is an ATP binding site.

The protein belongs to the class-I aminoacyl-tRNA synthetase family. Glutamate--tRNA ligase type 1 subfamily. In terms of assembly, monomer.

The protein resides in the cytoplasm. The catalysed reaction is tRNA(Glu) + L-glutamate + ATP = L-glutamyl-tRNA(Glu) + AMP + diphosphate. Its function is as follows. Catalyzes the attachment of glutamate to tRNA(Glu) in a two-step reaction: glutamate is first activated by ATP to form Glu-AMP and then transferred to the acceptor end of tRNA(Glu). The polypeptide is Glutamate--tRNA ligase (Phenylobacterium zucineum (strain HLK1)).